The sequence spans 78 residues: Acyl carrier protein (78 aa).

Positions 2 to 77 (SDTADRVQKI…DATKYIEEHK (76 aa)) constitute a Carrier domain. Residue serine 37 is modified to O-(pantetheine 4'-phosphoryl)serine.

It belongs to the acyl carrier protein (ACP) family. Post-translationally, 4'-phosphopantetheine is transferred from CoA to a specific serine of apo-ACP by AcpS. This modification is essential for activity because fatty acids are bound in thioester linkage to the sulfhydryl of the prosthetic group.

The protein resides in the cytoplasm. It participates in lipid metabolism; fatty acid biosynthesis. Functionally, carrier of the growing fatty acid chain in fatty acid biosynthesis. This chain is Acyl carrier protein, found in Erythrobacter litoralis (strain HTCC2594).